Here is a 1536-residue protein sequence, read N- to C-terminus: Ferredoxin-dependent glutamate synthase (1536 aa).

Catalysis depends on Cys27, which acts as the For GATase activity. The Glutamine amidotransferase type-2 domain occupies 27–427; it reads CGVGFIANLN…PGQMLCVDLS (401 aa). 1105–1162 contacts FMN; it reads LAEVHTTLVENSLREKVILRVDGGLRTGKDIIIAALMGAEEFGFGTVAMIATGCVMAR. [3Fe-4S] cluster is bound by residues Cys1158, Cys1164, and Cys1169.

Belongs to the glutamate synthase family. As to quaternary structure, monomer. The cofactor is [3Fe-4S] cluster. FAD is required as a cofactor. It depends on FMN as a cofactor.

The protein localises to the plastid. Its subcellular location is the chloroplast stroma. It catalyses the reaction 2 oxidized [2Fe-2S]-[ferredoxin] + 2 L-glutamate = L-glutamine + 2 reduced [2Fe-2S]-[ferredoxin] + 2-oxoglutarate + 2 H(+). It participates in amino-acid biosynthesis; L-glutamate biosynthesis via GLT pathway; L-glutamate from 2-oxoglutarate and L-glutamine (ferredoxin route): step 1/1. The protein operates within energy metabolism; nitrogen metabolism. This chain is Ferredoxin-dependent glutamate synthase (gltB), found in Antithamnion sp. (Red alga).